Consider the following 407-residue polypeptide: Carbamoyl phosphate synthase small chain (407 aa).

A CPSase region spans residues 1–203 (MSQNESGTIA…EPCGEYEGKE (203 aa)). 3 residues coordinate L-glutamine: serine 61, glycine 255, and glycine 257. The Glutamine amidotransferase type-1 domain occupies 207–405 (TVAAVDLGIK…CELMKNNSKE (199 aa)). Cysteine 283 acts as the Nucleophile in catalysis. L-glutamine-binding residues include phenylalanine 284, glutamine 287, asparagine 325, glycine 327, and phenylalanine 328. Residues histidine 378 and glutamate 380 contribute to the active site.

Belongs to the CarA family. In terms of assembly, composed of two chains; the small (or glutamine) chain promotes the hydrolysis of glutamine to ammonia, which is used by the large (or ammonia) chain to synthesize carbamoyl phosphate. Tetramer of heterodimers (alpha,beta)4.

It carries out the reaction hydrogencarbonate + L-glutamine + 2 ATP + H2O = carbamoyl phosphate + L-glutamate + 2 ADP + phosphate + 2 H(+). The enzyme catalyses L-glutamine + H2O = L-glutamate + NH4(+). The protein operates within amino-acid biosynthesis; L-arginine biosynthesis; carbamoyl phosphate from bicarbonate: step 1/1. It participates in pyrimidine metabolism; UMP biosynthesis via de novo pathway; (S)-dihydroorotate from bicarbonate: step 1/3. In terms of biological role, small subunit of the glutamine-dependent carbamoyl phosphate synthetase (CPSase). CPSase catalyzes the formation of carbamoyl phosphate from the ammonia moiety of glutamine, carbonate, and phosphate donated by ATP, constituting the first step of 2 biosynthetic pathways, one leading to arginine and/or urea and the other to pyrimidine nucleotides. The small subunit (glutamine amidotransferase) binds and cleaves glutamine to supply the large subunit with the substrate ammonia. This is Carbamoyl phosphate synthase small chain from Bifidobacterium longum (strain DJO10A).